The sequence spans 200 residues: Putative TLC domain-containing protein L438 (200 aa).

The region spanning 1-193 (MDYKQSNLFL…ILKILRAKLF (193 aa)) is the TLC domain. A run of 6 helical transmembrane segments spans residues 9-29 (FLFP…CGTF), 43-63 (THGI…LMIV), 74-94 (VHHF…YYLI), 96-116 (YLFA…AIKY), 131-151 (LAFF…LWFV), and 165-185 (YLIV…YRIL).

It is found in the membrane. The sequence is that of Putative TLC domain-containing protein L438 from Acanthamoeba polyphaga mimivirus (APMV).